The sequence spans 350 residues: GTPase Obg (350 aa).

In terms of domain architecture, Obg spans 1-175 (MFVDNIRIFA…GVFFMELRRI (175 aa)). The region spanning 176–345 (ADAGLVGYPN…LRNRLDELVG (170 aa)) is the OBG-type G domain. GTP-binding positions include 182-189 (GYPNAGKS), 207-211 (FTTLQ), 229-232 (DIPG), 299-302 (NKMD), and 326-328 (SAL). The Mg(2+) site is built by serine 189 and threonine 209.

The protein belongs to the TRAFAC class OBG-HflX-like GTPase superfamily. OBG GTPase family. Monomer. Mg(2+) serves as cofactor.

The protein resides in the cytoplasm. Its function is as follows. An essential GTPase which binds GTP, GDP and possibly (p)ppGpp with moderate affinity, with high nucleotide exchange rates and a fairly low GTP hydrolysis rate. Plays a role in control of the cell cycle, stress response, ribosome biogenesis and in those bacteria that undergo differentiation, in morphogenesis control. The protein is GTPase Obg of Akkermansia muciniphila (strain ATCC BAA-835 / DSM 22959 / JCM 33894 / BCRC 81048 / CCUG 64013 / CIP 107961 / Muc).